The following is a 396-amino-acid chain: Elongation factor Tu (396 aa).

One can recognise a tr-type G domain in the interval 10–206 (KPHVNVGTIG…ALDTYIPEPE (197 aa)). The interval 19–26 (GHVDHGKT) is G1. A GTP-binding site is contributed by 19 to 26 (GHVDHGKT). Thr-26 contacts Mg(2+). A G2 region spans residues 60–64 (GITIN). Positions 81–84 (DCPG) are G3. GTP is bound by residues 81-85 (DCPGH) and 136-139 (NKAD). Residues 136-139 (NKAD) are G4. The tract at residues 174 to 176 (SAL) is G5.

The protein belongs to the TRAFAC class translation factor GTPase superfamily. Classic translation factor GTPase family. EF-Tu/EF-1A subfamily. Monomer.

It localises to the cytoplasm. The enzyme catalyses GTP + H2O = GDP + phosphate + H(+). Functionally, GTP hydrolase that promotes the GTP-dependent binding of aminoacyl-tRNA to the A-site of ribosomes during protein biosynthesis. This chain is Elongation factor Tu, found in Thiobacillus denitrificans (strain ATCC 25259 / T1).